A 278-amino-acid polypeptide reads, in one-letter code: Large ribosomal subunit protein uL2 (278 aa).

The tract at residues 214-278 (WLGKRPHNRG…IMRSRHQRKS (65 aa)) is disordered.

This sequence belongs to the universal ribosomal protein uL2 family. In terms of assembly, part of the 50S ribosomal subunit. Forms a bridge to the 30S subunit in the 70S ribosome.

One of the primary rRNA binding proteins. Required for association of the 30S and 50S subunits to form the 70S ribosome, for tRNA binding and peptide bond formation. It has been suggested to have peptidyltransferase activity; this is somewhat controversial. Makes several contacts with the 16S rRNA in the 70S ribosome. The polypeptide is Large ribosomal subunit protein uL2 (Chelativorans sp. (strain BNC1)).